The following is a 217-amino-acid chain: Peptide methionine sulfoxide reductase MsrA (217 aa).

The active site involves Cys56.

Belongs to the MsrA Met sulfoxide reductase family.

The catalysed reaction is L-methionyl-[protein] + [thioredoxin]-disulfide + H2O = L-methionyl-(S)-S-oxide-[protein] + [thioredoxin]-dithiol. It carries out the reaction [thioredoxin]-disulfide + L-methionine + H2O = L-methionine (S)-S-oxide + [thioredoxin]-dithiol. Functionally, has an important function as a repair enzyme for proteins that have been inactivated by oxidation. Catalyzes the reversible oxidation-reduction of methionine sulfoxide in proteins to methionine. This is Peptide methionine sulfoxide reductase MsrA from Corynebacterium glutamicum (strain R).